A 125-amino-acid chain; its full sequence is Protein Bouncer (125 aa).

A signal peptide spans 1 to 18 (MGCVLLFLLLVCVPVVLP). 5 disulfide bridges follow: Cys23/Cys48, Cys26/Cys35, Cys42/Cys66, Cys72/Cys91, and Cys92/Cys97. The UPAR/Ly6 domain maps to 23-98 (CLFCPVTSLN…FSCCGGHYCN (76 aa)). The N-linked (GlcNAc...) asparagine glycan is linked to Asn32. A glycan (N-linked (GlcNAc...) asparagine) is linked at Asn84. Residue Asn98 is the site of GPI-anchor amidated asparagine attachment. The propeptide at 99–125 (SQPRAEPGGRLLLLLLPAAALTAAGAL) is removed in mature form.

It belongs to the SPACA4/bouncer family. In terms of assembly, interacts with spermatocyte complex composed of izumo1, spaca6 and tmem81. In terms of processing, N-glycosylated. As to expression, highly expressed in oocytes. Not expressed in testis.

Its subcellular location is the cell membrane. Oocyte-expressed fertilization factor that mediates sperm-egg binding and is essential for sperm entry into the egg. Necessary and sufficient to mediate species-specific gamete recognition and fertilization, which is essential for vertebrate species performing external fertilization. External fertilization cannot guarantee that only conspecific sperm reaches the egg by precopulatory mate choice: proteins such as Bouncer can therefore support the selection of conspecific sperm. This is Protein Bouncer from Danio rerio (Zebrafish).